A 595-amino-acid polypeptide reads, in one-letter code: Anthranilate synthase alpha subunit 1, chloroplastic (595 aa).

Residues 1 to 54 (MSSSMNVATMQALTFSRRLLPSVASRYLSSSSVTVTGYSGRSSAYAPSFRSIKC) constitute a chloroplast transit peptide. Val-55 carries the post-translational modification N-acetylvaline. L-tryptophan-binding positions include Ser-115 and 356-358 (PYM). Residue 391-392 (GT) coordinates chorismate. Mg(2+) is bound at residue Glu-418. Residues Tyr-506, Arg-526, 558–560 (GAG), and Gly-560 contribute to the chorismate site. Glu-573 provides a ligand contact to Mg(2+).

The protein belongs to the anthranilate synthase component I family. As to quaternary structure, heterotetramer consisting of two non-identical subunits: a beta subunit and a large alpha subunit. Requires Mg(2+) as cofactor. Expressed in the central cylinder of mature primary root zones, including pericycle and early lateral root primordia, and vasculature of cotyledons.

Its subcellular location is the plastid. The protein localises to the chloroplast. It catalyses the reaction chorismate + L-glutamine = anthranilate + pyruvate + L-glutamate + H(+). The protein operates within amino-acid biosynthesis; L-tryptophan biosynthesis; L-tryptophan from chorismate: step 1/5. Its activity is regulated as follows. Feedback inhibition by tryptophan. Part of a heterotetrameric complex that catalyzes the two-step biosynthesis of anthranilate, an intermediate in the biosynthesis of L-tryptophan. In the first step, the glutamine-binding beta subunit of anthranilate synthase (AS) provides the glutamine amidotransferase activity which generates ammonia as a substrate that, along with chorismate, is used in the second step, catalyzed by the large alpha subunit of AS to produce anthranilate. Plays an important regulatory role in auxin production via the tryptophan-dependent biosynthetic pathway. The sequence is that of Anthranilate synthase alpha subunit 1, chloroplastic (ASA1) from Arabidopsis thaliana (Mouse-ear cress).